A 207-amino-acid polypeptide reads, in one-letter code: Phenazine biosynthesis protein PhzD1 (207 aa).

Asp-38 (proton donor) is an active-site residue. Residues Gln-78, Arg-87, Lys-122, and 151–155 each bind substrate; that span reads YAHVG.

Belongs to the isochorismatase family. In terms of assembly, homodimer.

The enzyme catalyses (2S)-2-amino-4-deoxychorismate + H2O = (5S,6S)-6-amino-5-hydroxycyclohexa-1,3-diene-1-carboxyate + pyruvate. The protein operates within antibiotic biosynthesis; phenazine biosynthesis. In terms of biological role, involved in the biosynthesis of the antibiotic phenazine, a nitrogen-containing heterocyclic molecule. PhzD1 (operon phzA1B1C1E1F1G1) has a role in the biosynthesis of the phenazine during planktonic growth. Catalyzes the hydrolysis of the vinyl ether functional group of 2-amino-2-deoxyisochorismate (ADIC), yielding pyruvate and trans-2,3-dihydro-3-hydroxyanthranilic acid (DHHA). Also able to act on isochorismate, chorismate and 4-amino-4-deoxychorismate (ADC) as substrates. This Pseudomonas aeruginosa (strain ATCC 15692 / DSM 22644 / CIP 104116 / JCM 14847 / LMG 12228 / 1C / PRS 101 / PAO1) protein is Phenazine biosynthesis protein PhzD1.